The sequence spans 517 residues: MQPLSKLMAISKPRNLSLREQREVLRADMSWQQETNPVVETHDSEASRQKFRHFQYLKVSGPHEALSQLWELCLQWLRPEIHTKKQIIELLVLEQFLAILPEEVRTWVNLQHPNNSKDMVTLIEDVIEMLEDEDMPCKDSALQMGSIKEKMKAGSRTGKPQEPVTFKDVVVEFSKEEWGQLDSAVKNLYRNVMLENFRNLNSLRKAHLLSKPFESLKLESKKKRWIMEKEIPRKTIFDMKSISGEESSHGVIMTRLTESGHPSSDAWKGENWLYRNQKKWDINLPQEAFIPETIYTEEEDFECSENKKSFDINSVSSICAIQVGIPSRKGSPKCDKFKTYFKFNLDSVGKQHSEYEYGNDLSLSTDIRHQKSHTTMNSYECYQCGKAFCRSSSLIRHQIIHTGEKPYKCSECGRFFNRRTNLTKHQKLHAEAKACTSNKCGKAFSKSEDSNNPTLHFGNNFYQCVNCGKSFNRSSSLIRHQMIHTGEKPFKCKECSKAFNRSSNLVKHQKLHTRDKS.

Positions 48-126 (RQKFRHFQYL…KDMVTLIEDV (79 aa)) constitute an SCAN box domain. A KRAB domain is found at 164–237 (VTFKDVVVEF…EKEIPRKTIF (74 aa)). C2H2-type zinc fingers lie at residues 379-401 (YECY…QIIH), 407-429 (YKCS…QKLH), 462-484 (YQCV…QMIH), and 490-512 (FKCK…QKLH).

It belongs to the krueppel C2H2-type zinc-finger protein family.

It is found in the nucleus. Functionally, may be involved in transcriptional regulation. The chain is Zinc finger protein 215 (ZNF215) from Homo sapiens (Human).